The sequence spans 192 residues: NADH:FMN oxidoreductase (192 aa).

Residues 1 to 20 (MSDKPNAVSSHTTPDVPEVA) form a disordered region. FMN is bound by residues 60 to 63 (TATS), 77 to 84 (NIAETSSS), alanine 111, and arginine 117.

The protein belongs to the non-flavoprotein flavin reductase family.

The protein localises to the cytoplasm. It catalyses the reaction FMNH2 + NAD(+) = FMN + NADH + 2 H(+). It functions in the pathway sulfur metabolism; dibenzothiophene degradation. An NADH:FMN oxidoreductase which supplies reduced FMN for the '4S' desulfurization pathway that removes covalently bound sulfur from dibenzothiophene (DBT) without breaking carbon-carbon bonds. Provides DszA and DszC (DBTO2-monooxygenase and DBT-monooxygenase respectively) with reduced flavin (FMN). The chain is NADH:FMN oxidoreductase from Rhodococcus erythropolis (Arthrobacter picolinophilus).